Reading from the N-terminus, the 359-residue chain is 5-amino-6-(D-ribitylamino)uracil--L-tyrosine 4-hydroxyphenyl transferase (359 aa).

The 238-residue stretch at 45-282 (VTYVVNANIN…TYAISRIFFK (238 aa)) folds into the Radical SAM core domain. [4Fe-4S] cluster is bound by residues cysteine 59, cysteine 63, and cysteine 66.

The protein belongs to the radical SAM superfamily. CofH family. Consists of two subunits, CofG and CofH. [4Fe-4S] cluster is required as a cofactor.

The enzyme catalyses 5-amino-6-(D-ribitylamino)uracil + L-tyrosine + S-adenosyl-L-methionine = 5-amino-5-(4-hydroxybenzyl)-6-(D-ribitylimino)-5,6-dihydrouracil + 2-iminoacetate + 5'-deoxyadenosine + L-methionine + H(+). Its pathway is cofactor biosynthesis; coenzyme F0 biosynthesis. In terms of biological role, catalyzes the radical-mediated synthesis of 5-amino-5-(4-hydroxybenzyl)-6-(D-ribitylimino)-5,6-dihydrouracil from 5-amino-6-(D-ribitylamino)uracil and L-tyrosine. In Methanococcus maripaludis (strain C5 / ATCC BAA-1333), this protein is 5-amino-6-(D-ribitylamino)uracil--L-tyrosine 4-hydroxyphenyl transferase.